Reading from the N-terminus, the 592-residue chain is Bifunctional purine biosynthesis protein ADE17 (592 aa).

Residues 1-147 form the MGS-like domain; the sequence is MANYTKTAIL…KNHARVTILS (147 aa). Residues 35–38, 65–68, 102–103, and 126–127 each bind IMP; these read SGGT, RVKT, CN, and DI. The Proton donor/acceptor; for FAICAR cyclization activity role is filled by Lys-138. 5-amino-1-(5-phospho-beta-D-ribosyl)imidazole-4-carboxamide is bound by residues 206–207, His-267, Gly-315, Asp-338, Asn-430, and Arg-450; that span reads RY. The active-site Proton acceptor; for AICAR formyltransferase activity is His-267. Ile-451 is a (6R)-10-formyltetrahydrofolate binding site. Phe-541 is a binding site for 5-amino-1-(5-phospho-beta-D-ribosyl)imidazole-4-carboxamide. Residues Asp-546 and 565–566 contribute to the (6R)-10-formyltetrahydrofolate site; that span reads SV. Arg-588 contributes to the 5-amino-1-(5-phospho-beta-D-ribosyl)imidazole-4-carboxamide binding site.

It belongs to the PurH family. In terms of assembly, homodimer.

It localises to the cytoplasm. The protein resides in the cytosol. The catalysed reaction is (6R)-10-formyltetrahydrofolate + 5-amino-1-(5-phospho-beta-D-ribosyl)imidazole-4-carboxamide = 5-formamido-1-(5-phospho-D-ribosyl)imidazole-4-carboxamide + (6S)-5,6,7,8-tetrahydrofolate. It carries out the reaction IMP + H2O = 5-formamido-1-(5-phospho-D-ribosyl)imidazole-4-carboxamide. The protein operates within purine metabolism; IMP biosynthesis via de novo pathway; 5-formamido-1-(5-phospho-D-ribosyl)imidazole-4-carboxamide from 5-amino-1-(5-phospho-D-ribosyl)imidazole-4-carboxamide (10-formyl THF route): step 1/1. It participates in purine metabolism; IMP biosynthesis via de novo pathway; IMP from 5-formamido-1-(5-phospho-D-ribosyl)imidazole-4-carboxamide: step 1/1. In terms of biological role, bifunctional enzyme that catalyzes the last two steps of purine biosynthesis. Acts as a transformylase that incorporates a formyl group to the AMP analog AICAR (5-amino-1-(5-phospho-beta-D-ribosyl)imidazole-4-carboxamide) to produce the intermediate formyl-AICAR (FAICAR). Also catalyzes the cyclization of FAICAR to IMP. The chain is Bifunctional purine biosynthesis protein ADE17 from Saccharomyces cerevisiae (strain ATCC 204508 / S288c) (Baker's yeast).